Here is a 130-residue protein sequence, read N- to C-terminus: Small ribosomal subunit protein uS8 (130 aa).

This sequence belongs to the universal ribosomal protein uS8 family. As to quaternary structure, part of the 30S ribosomal subunit. Contacts proteins S5 and S12.

One of the primary rRNA binding proteins, it binds directly to 16S rRNA central domain where it helps coordinate assembly of the platform of the 30S subunit. This chain is Small ribosomal subunit protein uS8, found in Alcanivorax borkumensis (strain ATCC 700651 / DSM 11573 / NCIMB 13689 / SK2).